A 338-amino-acid polypeptide reads, in one-letter code: Probable beta-1,4-xylosyltransferase IRX9 (338 aa).

The disordered stretch occupies residues methionine 1–serine 21. Topologically, residues methionine 1–arginine 27 are cytoplasmic. A helical; Signal-anchor for type II membrane protein transmembrane segment spans residues alanine 28–alanine 46. Over proline 47–leucine 338 the chain is Lumenal. Asparagine 232 and asparagine 314 each carry an N-linked (GlcNAc...) asparagine glycan.

Belongs to the glycosyltransferase 43 family.

It is found in the golgi apparatus membrane. Probable beta-1,4-xylosyltransferase involved in xylan biosynthesis in cell walls. The sequence is that of Probable beta-1,4-xylosyltransferase IRX9 from Oryza sativa subsp. japonica (Rice).